Reading from the N-terminus, the 343-residue chain is DNA repair and recombination protein RadA (343 aa).

Residue 107 to 114 (GEFGAGKS) coordinates ATP.

It belongs to the eukaryotic RecA-like protein family.

Involved in DNA repair and in homologous recombination. Binds and assemble on single-stranded DNA to form a nucleoprotein filament. Hydrolyzes ATP in a ssDNA-dependent manner and promotes DNA strand exchange between homologous DNA molecules. This Halobacterium salinarum (strain ATCC 29341 / DSM 671 / R1) protein is DNA repair and recombination protein RadA.